A 334-amino-acid polypeptide reads, in one-letter code: Mevalonate kinase (334 aa).

110 to 120 (PVGAGLGSSAA) is a binding site for ATP. Asp-161 acts as the Proton acceptor in catalysis.

Belongs to the GHMP kinase family. Mevalonate kinase subfamily. As to quaternary structure, homodimer. It depends on Mg(2+) as a cofactor.

Its subcellular location is the cytoplasm. It catalyses the reaction (R)-mevalonate + ATP = (R)-5-phosphomevalonate + ADP + H(+). The protein operates within isoprenoid biosynthesis; isopentenyl diphosphate biosynthesis via mevalonate pathway; isopentenyl diphosphate from (R)-mevalonate: step 1/3. In terms of biological role, catalyzes the phosphorylation of (R)-mevalonate (MVA) to (R)-mevalonate 5-phosphate (MVAP). Functions in the mevalonate (MVA) pathway leading to isopentenyl diphosphate (IPP), a key precursor for the biosynthesis of isoprenoid compounds such as archaeal membrane lipids. This is Mevalonate kinase from Thermococcus onnurineus (strain NA1).